We begin with the raw amino-acid sequence, 424 residues long: Mitogen-activated protein kinase mpkA (424 aa).

Residues 23–314 (YNVTKELGQG…VEEALEHPYL (292 aa)) enclose the Protein kinase domain. ATP contacts are provided by residues 29-37 (LGQGAYGIV) and K52. The segment at 375–424 (QQIAQQTNVPIPDHQQGGWKQEEPKPQEVHAAGGHVNDLESSLQRGMDVQ) is disordered.

It belongs to the protein kinase superfamily. Ser/Thr protein kinase family. As to quaternary structure, interacts with flbB, flbC, brlA, and rasB. Interacts with fmqA and fmqC. Interacts with hsp90. The cofactor is Mg(2+). Post-translationally, phosphorylated by the upstreamm MAPKK mkk2. Phosphorylation is induced during asexual development. Phosphorylation is regulated by rlmA.

The enzyme catalyses L-seryl-[protein] + ATP = O-phospho-L-seryl-[protein] + ADP + H(+). The catalysed reaction is L-threonyl-[protein] + ATP = O-phospho-L-threonyl-[protein] + ADP + H(+). Its activity is regulated as follows. Activated by threonine and tyrosine phosphorylation by the upstreamm MAPKK mkk2. In terms of biological role, mitogen-activated protein kinase; part of cell wall integrity (CWI) signaling pathway composed of pkcA, the bck1-mkk2-mpka MAPK cascade and the downstream rlmA transcription regulator. The CWI signaling pathway regulates cell wall integrity and pyomelanin formation. CWI also controls oxidative stress response, gliotoxin production, iron adaptation and asexual development. Finally, CWI is constitutively required for A.fumigatus to cope with the temperature increase found in the mammalian lung environment, during infection. MpkA positively modulates the expression of fumiquinazoline cluster during conidiogenesis and directly phosphorylates fmqC, and perhaps also fmqA. This chain is Mitogen-activated protein kinase mpkA, found in Aspergillus fumigatus (strain ATCC MYA-4609 / CBS 101355 / FGSC A1100 / Af293) (Neosartorya fumigata).